A 186-amino-acid chain; its full sequence is Peptidyl-tRNA hydrolase (186 aa).

Y14 contributes to the tRNA binding site. The active-site Proton acceptor is H19. TRNA-binding residues include F65, N67, and N113.

Belongs to the PTH family. In terms of assembly, monomer.

It is found in the cytoplasm. The catalysed reaction is an N-acyl-L-alpha-aminoacyl-tRNA + H2O = an N-acyl-L-amino acid + a tRNA + H(+). Its function is as follows. Hydrolyzes ribosome-free peptidyl-tRNAs (with 1 or more amino acids incorporated), which drop off the ribosome during protein synthesis, or as a result of ribosome stalling. Catalyzes the release of premature peptidyl moieties from peptidyl-tRNA molecules trapped in stalled 50S ribosomal subunits, and thus maintains levels of free tRNAs and 50S ribosomes. The protein is Peptidyl-tRNA hydrolase of Limosilactobacillus fermentum (strain NBRC 3956 / LMG 18251) (Lactobacillus fermentum).